Here is an 896-residue protein sequence, read N- to C-terminus: MFGSLVKKVFGSKNEREIKKLWPIVARINELEASISPLSDEQLRDKTAEFKERHGKGESLDALMPEAFAVCREASKRVLGMRHFDVQLIGGMVLHSGKISEMKTGEGKTLVATLPAYLNAISGKGVHVVTVNDYLARRDSEWMGRLYSFLGLTVGVIVHGVEDDQRRINYAADITYGTNNEFGFDYLRDNMKFSLDDYVQRGFNFAIVDEVDSILIDEARTPLIISGPTEDSTDKYYVIDRIIPLLKKGEVKEEEANTLSGKRKLYTGDFTIDEKAKSATLTEQGVLKVEKLLKVDNLYDPRNIEFLHHTQQALRAHAMYRRDVDYVVKDGEVMIVDEFTGRLMPGRRWSDGLHQAIEAKEGVTIENENQTLATITFQNYFRMYKKLGGMTGTADTEAEEFHKIYKLDVVVIPTNRPLLRPDFPDVIYKTEREKFGAVIQDIKEHYATGQPCLVGTISIEKSEVLSELLKREGIPHNVLNAKQHEREAEIVSQAGRLKAITIATNMAGRGTDILLGGNADALASQWRRANPEAGEEEYQAILKNYKTVCAAEHDEVVRLGGLHIIGTERHESRRIDNQLRGRSGRQGDPGSSRFYLSLEDDLLRIFGSERVSKIMDFLKIEEGEAITHAMINKSIENAQKKVEAHNFDIRKHLIEYDDVMNKQREVIYTQRREILGGQDIRESFLEMLDETVEEIVASYAIEKSPAEEWDWQAINEAVFKCFNLQFELPQDTMARLTPAGLKEMLAEQAHALFAARVKEMGDDLIDHLIKVMMLQAIDTHWKDHLLNIDHLKEGIGLRGYGQKDPKQEYKKEAYELFMGLIMRIREEVVERIFWVQLERPEEVEEIEEEQRSKKIVFNLSEEEERVQEPARSNRVAGRNDPCPCGSGKKYKKCCGK.

Residues Gln-87, 105-109, and Asp-512 contribute to the ATP site; that span reads GEGKT. Residues 867 to 889 are disordered; it reads QEPARSNRVAGRNDPCPCGSGKK. Residues Cys-882, Cys-884, Cys-893, and Cys-894 each coordinate Zn(2+).

Belongs to the SecA family. As to quaternary structure, monomer and homodimer. Part of the essential Sec protein translocation apparatus which comprises SecA, SecYEG and auxiliary proteins SecDF-YajC and YidC. Zn(2+) serves as cofactor.

It is found in the cell inner membrane. Its subcellular location is the cytoplasm. It carries out the reaction ATP + H2O + cellular proteinSide 1 = ADP + phosphate + cellular proteinSide 2.. Its function is as follows. Part of the Sec protein translocase complex. Interacts with the SecYEG preprotein conducting channel. Has a central role in coupling the hydrolysis of ATP to the transfer of proteins into and across the cell membrane, serving as an ATP-driven molecular motor driving the stepwise translocation of polypeptide chains across the membrane. The chain is Protein translocase subunit SecA from Pelobacter propionicus (strain DSM 2379 / NBRC 103807 / OttBd1).